We begin with the raw amino-acid sequence, 247 residues long: Small ribosomal subunit protein uS2 (247 aa).

Belongs to the universal ribosomal protein uS2 family.

The sequence is that of Small ribosomal subunit protein uS2 from Cupriavidus metallidurans (strain ATCC 43123 / DSM 2839 / NBRC 102507 / CH34) (Ralstonia metallidurans).